The chain runs to 445 residues: Probable D-serine dehydratase (445 aa).

N6-(pyridoxal phosphate)lysine is present on K116.

It belongs to the serine/threonine dehydratase family. DsdA subfamily. Pyridoxal 5'-phosphate serves as cofactor.

The enzyme catalyses D-serine = pyruvate + NH4(+). This Bacillus mycoides (strain KBAB4) (Bacillus weihenstephanensis) protein is Probable D-serine dehydratase.